The chain runs to 147 residues: Large ribosomal subunit protein bL9 (147 aa).

It belongs to the bacterial ribosomal protein bL9 family.

Functionally, binds to the 23S rRNA. The chain is Large ribosomal subunit protein bL9 from Myxococcus xanthus (strain DK1622).